The chain runs to 145 residues: Holo-[acyl-carrier-protein] synthase (145 aa).

Positions 9 and 59 each coordinate Mg(2+).

This sequence belongs to the P-Pant transferase superfamily. AcpS family. The cofactor is Mg(2+).

It is found in the cytoplasm. It carries out the reaction apo-[ACP] + CoA = holo-[ACP] + adenosine 3',5'-bisphosphate + H(+). Its function is as follows. Transfers the 4'-phosphopantetheine moiety from coenzyme A to a Ser of acyl-carrier-protein. This chain is Holo-[acyl-carrier-protein] synthase, found in Nocardia farcinica (strain IFM 10152).